The following is a 157-amino-acid chain: MDFLMSKHEADAPHLLIVEARFYDDLADALLDGAKAALDEAGATYDVVTVPGALEIPATISFALDGADNGGTEYDGFVALGTVIRGETYHFDIVSNESCRALTDLSVEESIAIGNGILTVENEEQAWVRARREDKDKGGFAARAALTMIGLRKKFGA.

Residues Phe22, 53-55 (ALE), and 82-84 (TVI) contribute to the 5-amino-6-(D-ribitylamino)uracil site. (2S)-2-hydroxy-3-oxobutyl phosphate is bound at residue 87 to 88 (ET). His90 (proton donor) is an active-site residue. 5-amino-6-(D-ribitylamino)uracil is bound at residue Asn115. Arg129 contributes to the (2S)-2-hydroxy-3-oxobutyl phosphate binding site.

This sequence belongs to the DMRL synthase family.

It catalyses the reaction (2S)-2-hydroxy-3-oxobutyl phosphate + 5-amino-6-(D-ribitylamino)uracil = 6,7-dimethyl-8-(1-D-ribityl)lumazine + phosphate + 2 H2O + H(+). Its pathway is cofactor biosynthesis; riboflavin biosynthesis; riboflavin from 2-hydroxy-3-oxobutyl phosphate and 5-amino-6-(D-ribitylamino)uracil: step 1/2. Its function is as follows. Catalyzes the formation of 6,7-dimethyl-8-ribityllumazine by condensation of 5-amino-6-(D-ribitylamino)uracil with 3,4-dihydroxy-2-butanone 4-phosphate. This is the penultimate step in the biosynthesis of riboflavin. This is 6,7-dimethyl-8-ribityllumazine synthase 1 from Brucella suis biovar 1 (strain 1330).